Reading from the N-terminus, the 119-residue chain is Ribosome-binding factor A (119 aa).

Belongs to the RbfA family. As to quaternary structure, monomer. Binds 30S ribosomal subunits, but not 50S ribosomal subunits or 70S ribosomes.

Its subcellular location is the cytoplasm. Its function is as follows. One of several proteins that assist in the late maturation steps of the functional core of the 30S ribosomal subunit. Associates with free 30S ribosomal subunits (but not with 30S subunits that are part of 70S ribosomes or polysomes). Required for efficient processing of 16S rRNA. May interact with the 5'-terminal helix region of 16S rRNA. This Buchnera aphidicola subsp. Baizongia pistaciae (strain Bp) protein is Ribosome-binding factor A.